Reading from the N-terminus, the 143-residue chain is Transcriptional regulator MraZ (143 aa).

SpoVT-AbrB domains follow at residues 5 to 47 and 76 to 119; these read QYEH…SLDE and AVEC…SKEV.

This sequence belongs to the MraZ family. In terms of assembly, forms oligomers.

It localises to the cytoplasm. It is found in the nucleoid. This Caldanaerobacter subterraneus subsp. tengcongensis (strain DSM 15242 / JCM 11007 / NBRC 100824 / MB4) (Thermoanaerobacter tengcongensis) protein is Transcriptional regulator MraZ.